A 184-amino-acid chain; its full sequence is Probable S-adenosyl-L-methionine-binding protein PYRAB06630 (184 aa).

Residues 9–140 form the TsaA-like domain; it reads YRPIGIIHSP…YVPEFDVREN (132 aa). S-adenosyl-L-methionine contacts are provided by residues 26–28, 65–66, arginine 89, and 120–123; these read PIQ, HR, and LDGT.

It belongs to the tRNA methyltransferase O family.

In Pyrococcus abyssi (strain GE5 / Orsay), this protein is Probable S-adenosyl-L-methionine-binding protein PYRAB06630.